We begin with the raw amino-acid sequence, 437 residues long: Histidinol dehydrogenase (437 aa).

NAD(+) contacts are provided by Tyr-133, Gln-191, and Asn-214. Substrate-binding residues include Ser-240, Gln-262, and His-265. The Zn(2+) site is built by Gln-262 and His-265. Catalysis depends on proton acceptor residues Glu-329 and His-330. Substrate-binding residues include His-330, Asp-363, Glu-417, and His-422. Asp-363 is a binding site for Zn(2+). His-422 is a Zn(2+) binding site.

The protein belongs to the histidinol dehydrogenase family. As to quaternary structure, homodimer. Zn(2+) is required as a cofactor.

It catalyses the reaction L-histidinol + 2 NAD(+) + H2O = L-histidine + 2 NADH + 3 H(+). It participates in amino-acid biosynthesis; L-histidine biosynthesis; L-histidine from 5-phospho-alpha-D-ribose 1-diphosphate: step 9/9. Functionally, catalyzes the sequential NAD-dependent oxidations of L-histidinol to L-histidinaldehyde and then to L-histidine. The protein is Histidinol dehydrogenase of Blochmanniella floridana.